A 336-amino-acid chain; its full sequence is MIDAKSEHKIAPWKIEEVNALKELLKSANVIALIDMMEVPAVQLQEIRDKIRDQMTLKMSRNTLIKRAVEEVAEETGNPEFAKLVDYLDKGAAIVVTEMNPFKLFKTLEESKSPAPIKGGAIAPCDIEVKSGSTGMPPGPFLSELKAVGIPAAIDKGKIGIKEDKVVAKEGDVISPKLAVVLSALGIKPVTVGLNVLGVYEEGVIYTSDVLRIDEEEFLGKLQKAYTNAFNLSVNAVIPTSATIETIVQKAFNDAKAVSVESAFITEKTADAILGKAHAQMIAVAKLAGDEALDDDLKEQISSSAVVATEEAPKAETKKEEKKEEAAPAAGLGLLF.

The disordered stretch occupies residues 305–336; that stretch reads AVVATEEAPKAETKKEEKKEEAAPAAGLGLLF. Basic and acidic residues predominate over residues 311 to 326; sequence EAPKAETKKEEKKEEA.

It belongs to the universal ribosomal protein uL10 family. In terms of assembly, part of the 50S ribosomal subunit. Forms part of the ribosomal stalk which helps the ribosome interact with GTP-bound translation factors. Forms a heptameric L10(L12)2(L12)2(L12)2 complex, where L10 forms an elongated spine to which the L12 dimers bind in a sequential fashion.

Forms part of the ribosomal stalk, playing a central role in the interaction of the ribosome with GTP-bound translation factors. The polypeptide is Large ribosomal subunit protein uL10 (Methanococcus vannielii (strain ATCC 35089 / DSM 1224 / JCM 13029 / OCM 148 / SB)).